Here is a 299-residue protein sequence, read N- to C-terminus: Tyrosine recombinase XerC (299 aa).

In terms of domain architecture, Core-binding (CB) spans 1–85 (MQADLDAFLD…ALRGFYRYLL (85 aa)). In terms of domain architecture, Tyr recombinase spans 106–285 (RLPRTLDADR…DFQHLAAVYD (180 aa)). Catalysis depends on residues Arg-146, Lys-170, His-237, Arg-240, and His-263. The O-(3'-phospho-DNA)-tyrosine intermediate role is filled by Tyr-272.

Belongs to the 'phage' integrase family. XerC subfamily. In terms of assembly, forms a cyclic heterotetrameric complex composed of two molecules of XerC and two molecules of XerD.

The protein localises to the cytoplasm. Functionally, site-specific tyrosine recombinase, which acts by catalyzing the cutting and rejoining of the recombining DNA molecules. The XerC-XerD complex is essential to convert dimers of the bacterial chromosome into monomers to permit their segregation at cell division. It also contributes to the segregational stability of plasmids. The polypeptide is Tyrosine recombinase XerC (Azotobacter vinelandii (strain DJ / ATCC BAA-1303)).